A 275-amino-acid chain; its full sequence is 4-hydroxy-3-methylbut-2-enyl diphosphate reductase (275 aa).

Residue cysteine 12 participates in [4Fe-4S] cluster binding. Positions 40 and 70 each coordinate (2E)-4-hydroxy-3-methylbut-2-enyl diphosphate. 2 residues coordinate dimethylallyl diphosphate: histidine 40 and histidine 70. 2 residues coordinate isopentenyl diphosphate: histidine 40 and histidine 70. Position 92 (cysteine 92) interacts with [4Fe-4S] cluster. Histidine 119 contacts (2E)-4-hydroxy-3-methylbut-2-enyl diphosphate. Residue histidine 119 participates in dimethylallyl diphosphate binding. Histidine 119 serves as a coordination point for isopentenyl diphosphate. Glutamate 121 functions as the Proton donor in the catalytic mechanism. A (2E)-4-hydroxy-3-methylbut-2-enyl diphosphate-binding site is contributed by threonine 151. Residue cysteine 181 coordinates [4Fe-4S] cluster. Residues serine 209, serine 210, asparagine 211, and serine 251 each contribute to the (2E)-4-hydroxy-3-methylbut-2-enyl diphosphate site. Dimethylallyl diphosphate-binding residues include serine 209, serine 210, asparagine 211, and serine 251. Residues serine 209, serine 210, asparagine 211, and serine 251 each coordinate isopentenyl diphosphate.

Belongs to the IspH family. [4Fe-4S] cluster serves as cofactor.

It catalyses the reaction isopentenyl diphosphate + 2 oxidized [2Fe-2S]-[ferredoxin] + H2O = (2E)-4-hydroxy-3-methylbut-2-enyl diphosphate + 2 reduced [2Fe-2S]-[ferredoxin] + 2 H(+). It carries out the reaction dimethylallyl diphosphate + 2 oxidized [2Fe-2S]-[ferredoxin] + H2O = (2E)-4-hydroxy-3-methylbut-2-enyl diphosphate + 2 reduced [2Fe-2S]-[ferredoxin] + 2 H(+). The protein operates within isoprenoid biosynthesis; dimethylallyl diphosphate biosynthesis; dimethylallyl diphosphate from (2E)-4-hydroxy-3-methylbutenyl diphosphate: step 1/1. Its pathway is isoprenoid biosynthesis; isopentenyl diphosphate biosynthesis via DXP pathway; isopentenyl diphosphate from 1-deoxy-D-xylulose 5-phosphate: step 6/6. Functionally, catalyzes the conversion of 1-hydroxy-2-methyl-2-(E)-butenyl 4-diphosphate (HMBPP) into a mixture of isopentenyl diphosphate (IPP) and dimethylallyl diphosphate (DMAPP). Acts in the terminal step of the DOXP/MEP pathway for isoprenoid precursor biosynthesis. In Thermotoga sp. (strain RQ2), this protein is 4-hydroxy-3-methylbut-2-enyl diphosphate reductase.